The primary structure comprises 510 residues: ATP synthase subunit alpha (510 aa).

169–176 (GDRQTGKT) provides a ligand contact to ATP.

This sequence belongs to the ATPase alpha/beta chains family. As to quaternary structure, F-type ATPases have 2 components, CF(1) - the catalytic core - and CF(0) - the membrane proton channel. CF(1) has five subunits: alpha(3), beta(3), gamma(1), delta(1), epsilon(1). CF(0) has three main subunits: a(1), b(2) and c(9-12). The alpha and beta chains form an alternating ring which encloses part of the gamma chain. CF(1) is attached to CF(0) by a central stalk formed by the gamma and epsilon chains, while a peripheral stalk is formed by the delta and b chains.

It is found in the cell inner membrane. It carries out the reaction ATP + H2O + 4 H(+)(in) = ADP + phosphate + 5 H(+)(out). Functionally, produces ATP from ADP in the presence of a proton gradient across the membrane. The alpha chain is a regulatory subunit. This Rickettsia felis (strain ATCC VR-1525 / URRWXCal2) (Rickettsia azadi) protein is ATP synthase subunit alpha.